The primary structure comprises 425 residues: Isocitrate dehydrogenase [NADP] (425 aa).

Residue threonine 114 coordinates NADP(+). Serine 123, asparagine 125, arginine 129, arginine 139, and arginine 162 together coordinate D-threo-isocitrate. Aspartate 316 serves as a coordination point for Mg(2+). Residues 348 to 354, asparagine 361, tyrosine 400, and arginine 404 each bind NADP(+); that span reads HGTAPKY.

It belongs to the isocitrate and isopropylmalate dehydrogenases family. As to quaternary structure, homodimer. The cofactor is Mg(2+). Mn(2+) is required as a cofactor.

The catalysed reaction is D-threo-isocitrate + NADP(+) = 2-oxoglutarate + CO2 + NADPH. Functionally, catalyzes the oxidative decarboxylation of isocitrate to 2-oxoglutarate and carbon dioxide with the concomitant reduction of NADP(+). The chain is Isocitrate dehydrogenase [NADP] (icd) from Helicobacter pylori (strain J99 / ATCC 700824) (Campylobacter pylori J99).